The following is a 311-amino-acid chain: JNK1/MAPK8-associated membrane protein (311 aa).

The Lumenal segment spans residues 1–57 (MAVDIQPACLGLYCGKTLLFKNGSTEIYGECGVCPRGQRTNAQKYCQPCTESPELYD). N-linked (GlcNAc...) asparagine glycosylation occurs at asparagine 22. Residues 58-78 (WLYLGFMAMLPLVLHWFFIEW) form a helical membrane-spanning segment. Residues 79 to 87 (YSGKKSSSA) are Cytoplasmic-facing. The chain crosses the membrane as a helical span at residues 88–108 (LFQHITALFECSMAAIITLLV). Residues 109 to 149 (SDPVGVLYIRSCRVLMLSDWYTMLYNPSPDYVTTVHCTHEA) are Lumenal-facing. The chain crosses the membrane as a helical span at residues 150 to 170 (VYPLYTIVFIYYAFCLVLMML). Residues 171-188 (LRPLLVKKIACGLGKSDR) lie on the Cytoplasmic side of the membrane. The helical transmembrane segment at 189-209 (FKSIYAALYFFPILTVLQAVG) threads the bilayer. Position 210 (glycine 210) is a topological domain, lumenal. A helical transmembrane segment spans residues 211-231 (GLLYYAFPYIILVLSLVTLAV). Residues 232–250 (YMSASEIENCYDLLVRKKR) are Cytoplasmic-facing. A helical transmembrane segment spans residues 251–271 (LIVLFSHWLLHAYGIISISRV). At 272–277 (DKLEQD) the chain is on the lumenal side. The chain crosses the membrane as a helical span at residues 278 to 298 (LPLLALVPTPALFYLFTAKFT). At 299–311 (EPSRILSEGANGH) the chain is on the cytoplasmic side.

As to quaternary structure, interacts with RNF5 and MAPK8, but not with MAPK9. Binding to MAPK8 occurs before and after exposure to stress, such as UV irradiation. After exposure to stress, interacts with phosphorylated MAPK8. Competes with DUSP10 for MAPK8 binding. Associates with multiple components of the proteasome and with ERAD regulatory proteins including AMFR/GP78, CANX, PSMC1, PSMC2, PSMC3/TBP1, PSMC5, PSMC6, PSMD8, SEC61-ALPHA and UFD1. Interacts with DERL1 (in the presence of misfolded protein CFTR(F508del)). In terms of processing, ubiquitinated by RNF5 via 'Lys-63'-linked ubiquitin linkage in a UBE2N-dependent manner. Ubiquitination decreases association with components of the proteasome and ERAD.

Its subcellular location is the endoplasmic reticulum membrane. Regulates the duration of MAPK8 activity in response to various stress stimuli. Facilitates degradation of misfolded endoplasmic reticulum (ER) proteins through the recruitment of components of the proteasome and endoplasmic reticulum-associated degradation (ERAD) system. This chain is JNK1/MAPK8-associated membrane protein (JKAMP), found in Homo sapiens (Human).